Here is a 174-residue protein sequence, read N- to C-terminus: Zinc finger AN1 domain-containing stress-associated protein 15 (174 aa).

The tract at residues 1–61 (MAQESCDLNK…TPPAAAAAAS (61 aa)) is disordered. The segment covering 18 to 41 (PSSSSSPSPSPTTASPSPPTAQMT) has biased composition (low complexity). Positions 42-54 (EPPPPQSTPPTPP) are enriched in pro residues. The segment at 109 to 155 (VLFVNRCNVCRKRVGLTGFRCRCGELFCPRHRHSETHECSFDYKTAG) adopts an AN1-type zinc-finger fold. Residues Cys-115, Cys-118, Cys-129, Cys-131, Cys-136, His-139, His-145, and Cys-147 each coordinate Zn(2+).

Functionally, may be involved in environmental stress response. The chain is Zinc finger AN1 domain-containing stress-associated protein 15 (SAP15) from Oryza sativa subsp. japonica (Rice).